A 503-amino-acid polypeptide reads, in one-letter code: Maturase K (503 aa).

This sequence belongs to the intron maturase 2 family. MatK subfamily.

It is found in the plastid. Its subcellular location is the chloroplast. Functionally, usually encoded in the trnK tRNA gene intron. Probably assists in splicing its own and other chloroplast group II introns. The polypeptide is Maturase K (Thryptomene saxicola (Rock thryptomene)).